The chain runs to 773 residues: MLPTGEGAEGQDWHLDMQLPSKVVLSAAALLLVTAAYKLYKSRPAPVGQAGRNNKDHKAENETEALGQLAFQEAPPGTLPRGRRRRKASKGAGTSLDYSLVDPEDPCILDISRSEEATRKGSDESQGRQCPDSQQVPPPCGGQEAGTDVRGKPNPPHLPHSGCEPTSSSGRLIPGVGGSCVGDKLSPWPDSRPPEETGSGDLEAPNGWTDLTLVNGDMNQSWIFTHMTGVSRGEAGVLQAAADMGLATQQQEGATNASHTFSSVARIRMEENIIQKAEGPGLKGRVYDYFVESTSKADSRPVPCPAALADAPSPGPGPEPLVTGAASRDEAANTAGGGASEAASPQPVASPSAPGFSRKVSLLQIAENPELQLQPEGFRMPLPAHLDQRAQLSSACSHGEPHVQLVAGTNFFHIPLTPASALDVRLDLGNCYEMLTLAKRQGLETLKEAAYKVLSDNYLQVLRSPDIYGGLSGAERELILQRRFRGHKRLVVADMCPQDDSGRLCCYDNVQDAWHPLAQLPPEAMSRGCALCTLFNYLFVVSGCQEPGGQPSNRVFCYNPLTAIWSEVCPLNQARPHCRLVALEGHLYAIGGECLNTVERYDPRLDRWTFAPPLPNDTFALAHTATVCANEIFVTGGSLRYLLLRFSTQEQRWWAGPTGGSKDRTAEMVAVNGFLYRFDLNRSLGISVYRCSASTRLWYECATYRLPYPDAFQCAVVDDHIYCVGRRRMLCFLADHISPRFVSKELKGFPSARGTLLPAVLTLPVPDVPQTPV.

The chain crosses the membrane as a helical span at residues 23-40 (VVLSAAALLLVTAAYKLY). Asn-61 carries an N-linked (GlcNAc...) asparagine glycan. Disordered stretches follow at residues 64–99 (EALG…LDYS) and 114–207 (SEEA…APNG). The residue at position 89 (Ser-89) is a Phosphoserine. Basic and acidic residues predominate over residues 114 to 126 (SEEATRKGSDESQ). Residue Asn-256 is glycosylated (N-linked (GlcNAc...) asparagine). The segment at 296 to 355 (KADSRPVPCPAALADAPSPGPGPEPLVTGAASRDEAANTAGGGASEAASPQPVASPSAPG) is disordered. Kelch repeat units lie at residues 323 to 370 (TGAA…ENPE), 488 to 534 (KRLV…LCTL), 537 to 585 (YLFV…ALEG), 586 to 628 (HLYA…ATVC), and 631 to 673 (EIFV…AVNG). Positions 340–354 (SEAASPQPVASPSAP) are enriched in low complexity. Ser-361 carries the phosphoserine modification.

Its subcellular location is the membrane. This is Kelch domain-containing protein 7A (Klhdc7a) from Mus musculus (Mouse).